The primary structure comprises 220 residues: PRA1 family protein B4 (220 aa).

The disordered stretch occupies residues 1–27 (MASSAPPVLPISNPQTVPSAAPSSVES). The segment covering 12-27 (SNPQTVPSAAPSSVES) has biased composition (polar residues). 5 consecutive transmembrane segments (helical) span residues 83-103 (YSYF…FSLV), 105-125 (HPFS…LYLF), 146-166 (GCLI…SVLV), 170-190 (MIGV…DLFL), and 196-216 (AATG…PAVI).

This sequence belongs to the PRA1 family. Interacts with PRA1B1, PRA1B2, PRA1B3, PRA1B5, PRA1B6 and PRA1E. As to expression, expressed in roots, lateral roots, lateral root caps, stomata and trichomes.

It localises to the endosome membrane. Its function is as follows. May be involved in both secretory and endocytic intracellular trafficking in the endosomal/prevacuolar compartments. This is PRA1 family protein B4 (PRA1B4) from Arabidopsis thaliana (Mouse-ear cress).